Here is a 174-residue protein sequence, read N- to C-terminus: Crossover junction endodeoxyribonuclease RuvC (174 aa).

Catalysis depends on residues D16, E76, and D148. Residues D16, E76, and D148 each contribute to the Mg(2+) site.

This sequence belongs to the RuvC family. Homodimer which binds Holliday junction (HJ) DNA. The HJ becomes 2-fold symmetrical on binding to RuvC with unstacked arms; it has a different conformation from HJ DNA in complex with RuvA. In the full resolvosome a probable DNA-RuvA(4)-RuvB(12)-RuvC(2) complex forms which resolves the HJ. Mg(2+) serves as cofactor.

The protein localises to the cytoplasm. The enzyme catalyses Endonucleolytic cleavage at a junction such as a reciprocal single-stranded crossover between two homologous DNA duplexes (Holliday junction).. Functionally, the RuvA-RuvB-RuvC complex processes Holliday junction (HJ) DNA during genetic recombination and DNA repair. Endonuclease that resolves HJ intermediates. Cleaves cruciform DNA by making single-stranded nicks across the HJ at symmetrical positions within the homologous arms, yielding a 5'-phosphate and a 3'-hydroxyl group; requires a central core of homology in the junction. The consensus cleavage sequence is 5'-(A/T)TT(C/G)-3'. Cleavage occurs on the 3'-side of the TT dinucleotide at the point of strand exchange. HJ branch migration catalyzed by RuvA-RuvB allows RuvC to scan DNA until it finds its consensus sequence, where it cleaves and resolves the cruciform DNA. This is Crossover junction endodeoxyribonuclease RuvC from Rhodopseudomonas palustris (strain BisA53).